The primary structure comprises 493 residues: Probable cytosol aminopeptidase (493 aa).

Residues Lys-259 and Asp-264 each coordinate Mn(2+). Lys-271 is a catalytic residue. Residues Asp-282, Asp-341, and Glu-343 each coordinate Mn(2+). Arg-345 is a catalytic residue.

Belongs to the peptidase M17 family. It depends on Mn(2+) as a cofactor.

It is found in the cytoplasm. The catalysed reaction is Release of an N-terminal amino acid, Xaa-|-Yaa-, in which Xaa is preferably Leu, but may be other amino acids including Pro although not Arg or Lys, and Yaa may be Pro. Amino acid amides and methyl esters are also readily hydrolyzed, but rates on arylamides are exceedingly low.. It carries out the reaction Release of an N-terminal amino acid, preferentially leucine, but not glutamic or aspartic acids.. Its function is as follows. Presumably involved in the processing and regular turnover of intracellular proteins. Catalyzes the removal of unsubstituted N-terminal amino acids from various peptides. This chain is Probable cytosol aminopeptidase, found in Bacillus cytotoxicus (strain DSM 22905 / CIP 110041 / 391-98 / NVH 391-98).